The sequence spans 402 residues: Zinc finger protein 809 (402 aa).

The KRAB domain maps to 4–75; it reads VSFEDVAVDF…AEASSRSLPG (72 aa). The segment at 118 to 139 is disordered; sequence QEVSKGTTSRHRRAPVKSLCRK. Residues 125 to 139 are compositionally biased toward basic residues; it reads TSRHRRAPVKSLCRK. C2H2-type zinc fingers lie at residues 155–178, 184–206, 213–235, 241–263, 269–291, 297–319, and 325–347; these read YECK…RRTH, YECD…QKTH, YECS…ERTH, YECT…KKTH, FKCE…QKKH, YECT…RIAH, and YECK…QKRH.

The protein belongs to the krueppel C2H2-type zinc-finger protein family.

Its subcellular location is the nucleus. Functionally, transcription factor specifically required to repress retrotransposons in embryonic stem cells. Recognizes and binds retroviral DNA sequences from a large subset of mammalian retroviruses and retroelements and repress their expression by recruiting a repressive complex containing TRIM28/KAP1. The polypeptide is Zinc finger protein 809 (Mus musculus (Mouse)).